Consider the following 307-residue polypeptide: Pyridoxal 5'-phosphate synthase subunit PdxS (307 aa).

D37 serves as a coordination point for D-ribose 5-phosphate. The active-site Schiff-base intermediate with D-ribose 5-phosphate is the K94. G166 lines the D-ribose 5-phosphate pocket. D-glyceraldehyde 3-phosphate is bound at residue R178. D-ribose 5-phosphate contacts are provided by residues G227 and 248–249 (GS).

The protein belongs to the PdxS/SNZ family. As to quaternary structure, in the presence of PdxT, forms a dodecamer of heterodimers.

The catalysed reaction is aldehydo-D-ribose 5-phosphate + D-glyceraldehyde 3-phosphate + L-glutamine = pyridoxal 5'-phosphate + L-glutamate + phosphate + 3 H2O + H(+). Its pathway is cofactor biosynthesis; pyridoxal 5'-phosphate biosynthesis. Catalyzes the formation of pyridoxal 5'-phosphate from ribose 5-phosphate (RBP), glyceraldehyde 3-phosphate (G3P) and ammonia. The ammonia is provided by the PdxT subunit. Can also use ribulose 5-phosphate and dihydroxyacetone phosphate as substrates, resulting from enzyme-catalyzed isomerization of RBP and G3P, respectively. This is Pyridoxal 5'-phosphate synthase subunit PdxS from Mycobacterium leprae (strain Br4923).